A 57-amino-acid chain; its full sequence is UPF0391 membrane protein IL0696 (57 aa).

The next 2 helical transmembrane spans lie at 4-24 and 28-48; these read WVLIFLAVAVVAAILGFGGIA and AGIAKIIFYIFIILFAISLVV.

The protein belongs to the UPF0391 family.

The protein localises to the cell membrane. This chain is UPF0391 membrane protein IL0696, found in Idiomarina loihiensis (strain ATCC BAA-735 / DSM 15497 / L2-TR).